A 360-amino-acid chain; its full sequence is 3-isopropylmalate dehydrogenase (360 aa).

76–89 (GPKWDKLDMAIRPE) lines the NAD(+) pocket. Residues R96, R106, R134, and D224 each coordinate substrate. Mg(2+) is bound by residues D224, D248, and D252. 282–294 (GSAPDIAGQNMAN) provides a ligand contact to NAD(+).

This sequence belongs to the isocitrate and isopropylmalate dehydrogenases family. LeuB type 1 subfamily. In terms of assembly, homodimer. Requires Mg(2+) as cofactor. The cofactor is Mn(2+).

The protein localises to the cytoplasm. The catalysed reaction is (2R,3S)-3-isopropylmalate + NAD(+) = 4-methyl-2-oxopentanoate + CO2 + NADH. It participates in amino-acid biosynthesis; L-leucine biosynthesis; L-leucine from 3-methyl-2-oxobutanoate: step 3/4. In terms of biological role, catalyzes the oxidation of 3-carboxy-2-hydroxy-4-methylpentanoate (3-isopropylmalate) to 3-carboxy-4-methyl-2-oxopentanoate. The product decarboxylates to 4-methyl-2 oxopentanoate. In Hahella chejuensis (strain KCTC 2396), this protein is 3-isopropylmalate dehydrogenase.